We begin with the raw amino-acid sequence, 220 residues long: Cell division protein DedD (220 aa).

The helical transmembrane segment at 9–29 (LVGTIVLVALGVIVLPGLLDG) threads the bilayer. Disordered stretches follow at residues 46-84 (KAGDRDEPDMMPAATQALPTQPPEGAAEEVRAGDAAAPS) and 97-137 (FEPE…EEKA). Low complexity predominate over residues 57–70 (PAATQALPTQPPEG). Residues 100–109 (EPAPVAPPKP) are compositionally biased toward pro residues. Basic and acidic residues-rich tracts occupy residues 110 to 119 (KPVEPPKPKV) and 127 to 137 (PEPKPVVEEKA). The SPOR domain occupies 138 to 217 (APTGKAYVVQ…SGLSGVVMGY (80 aa)).

The protein belongs to the DedD family.

It is found in the cell inner membrane. Its function is as follows. Non-essential cell division protein that could be required for efficient cell constriction. This Escherichia coli (strain K12) protein is Cell division protein DedD.